The following is a 226-amino-acid chain: PKHD-type hydroxylase AZC_3753 (226 aa).

Positions 78 to 178 (RILPPMFNRY…RVASFFWTQS (101 aa)) constitute a Fe2OG dioxygenase domain. Positions 96, 98, and 159 each coordinate Fe cation. Arginine 169 lines the 2-oxoglutarate pocket.

Fe(2+) serves as cofactor. The cofactor is L-ascorbate.

The chain is PKHD-type hydroxylase AZC_3753 from Azorhizobium caulinodans (strain ATCC 43989 / DSM 5975 / JCM 20966 / LMG 6465 / NBRC 14845 / NCIMB 13405 / ORS 571).